We begin with the raw amino-acid sequence, 142 residues long: Large ribosomal subunit protein uL11 (142 aa).

Ala2 is modified (n,N,N-trimethylalanine). Residues Lys4 and Lys40 each carry the N6,N6,N6-trimethyllysine modification.

This sequence belongs to the universal ribosomal protein uL11 family. As to quaternary structure, part of the ribosomal stalk of the 50S ribosomal subunit. Interacts with L10 and the large rRNA to form the base of the stalk. L10 forms an elongated spine to which L12 dimers bind in a sequential fashion forming a multimeric L10(L12)X complex. In terms of processing, one or more lysine residues are methylated.

In terms of biological role, forms part of the ribosomal stalk which helps the ribosome interact with GTP-bound translation factors. In Shigella flexneri, this protein is Large ribosomal subunit protein uL11.